Here is a 620-residue protein sequence, read N- to C-terminus: UPF0313 protein BT_0254 (620 aa).

Residues 311–591 (AYDMIKFSVN…AQRQFFFWYK (281 aa)) enclose the Radical SAM core domain. 3 residues coordinate [4Fe-4S] cluster: C325, C329, and C332.

Belongs to the UPF0313 family. It depends on [4Fe-4S] cluster as a cofactor.

The sequence is that of UPF0313 protein BT_0254 from Bacteroides thetaiotaomicron (strain ATCC 29148 / DSM 2079 / JCM 5827 / CCUG 10774 / NCTC 10582 / VPI-5482 / E50).